The primary structure comprises 240 residues: Uridylate kinase (240 aa).

13 to 16 contacts ATP; the sequence is KLSG. The interval 21 to 26 is involved in allosteric activation by GTP; that stretch reads GDKGFG. Glycine 55 contributes to the UMP binding site. Residues glycine 56 and arginine 60 each coordinate ATP. Residues aspartate 75 and 136-143 contribute to the UMP site; that span reads IGNPYFST. The ATP site is built by asparagine 164, tyrosine 170, and aspartate 173.

The protein belongs to the UMP kinase family. As to quaternary structure, homohexamer.

It localises to the cytoplasm. The catalysed reaction is UMP + ATP = UDP + ADP. It participates in pyrimidine metabolism; CTP biosynthesis via de novo pathway; UDP from UMP (UMPK route): step 1/1. Its activity is regulated as follows. Allosterically activated by GTP. Inhibited by UTP. In terms of biological role, catalyzes the reversible phosphorylation of UMP to UDP. The polypeptide is Uridylate kinase (Staphylococcus haemolyticus (strain JCSC1435)).